The sequence spans 140 residues: Putative pre-16S rRNA nuclease (140 aa).

This sequence belongs to the YqgF nuclease family.

The protein localises to the cytoplasm. Its function is as follows. Could be a nuclease involved in processing of the 5'-end of pre-16S rRNA. The chain is Putative pre-16S rRNA nuclease from Enterococcus faecalis (strain ATCC 700802 / V583).